The chain runs to 751 residues: Adhesive plaque matrix protein (751 aa).

Positions 1–20 are cleaved as a signal peptide; sequence MEGIKLNLCLLCIFTCDILG. Residues 21–41 form a nonrepetitive linker region; that stretch reads FSNGNIYNAHGSAYAGASAGA. Tandem repeats lie at residues 109–118, 119–128, 129–138, 139–148, 149–158, 159–168, 169–178, 179–188, 189–198, 199–208, 209–218, 219–228, 229–238, 239–248, 249–258, 259–268, 269–278, 279–288, 289–298, 299–308, 309–318, 319–328, 329–338, 339–348, 349–358, 359–368, 369–378, 379–388, 389–398, 399–408, 409–418, 419–428, 429–438, 439–448, 449–458, 459–468, 469–478, 479–488, 489–498, 499–508, 509–518, 519–528, 529–538, 539–548, 549–558, 559–568, 569–578, 579–588, 589–598, 599–608, 609–618, 619–628, 629–638, 639–648, and 649–658. Residues 109-732 form a 63 X 10 AA tandem repeats of Y-[KR]-[APTS]-K-[KPMSLTIVA]-[STR]-Y-[PLS]-[PASRQT]-[STI] region; that stretch reads YKPKMTYPPT…YKPKPSYPPT (624 aa). The segment covering 158-167 has biased composition (low complexity); sequence TYKPKLTYPP. The segment at 158 to 359 is disordered; the sequence is TYKPKLTYPP…KPKTTYPPSY (202 aa). A compositionally biased stretch (pro residues) spans 168 to 184; it reads TYKPKPSYPPTYKPKPS. Residues 185 to 262 show a composition bias toward low complexity; it reads YPATYKSKSS…KTYPSTYKPK (78 aa). Low complexity-rich tracts occupy residues 288–343 and 350–359; these read TYKA…KAKP and KPKTTYPPSY. Residues 397–636 form a disordered region; it reads PTYKAKPSYP…PTYKAKPSYP (240 aa). Over residues 444–486 the composition is skewed to low complexity; it reads SYPPTYKAKPSYPPTYKAKPSYPPTYKAKPSYPPTYKTKPSYP. A 56; truncated repeat occupies 659-662; it reads YPST. Residues 660–751 are disordered; it reads PSTYKAKPSY…KKKISYPSQY (92 aa). Low complexity predominate over residues 662–677; that stretch reads TYKAKPSYPPTYKAKP. Tandem repeats lie at residues 663–672, 673–682, 683–692, 693–702, 703–712, 713–722, and 723–732. Residues 678–690 show a composition bias toward pro residues; that stretch reads SYPPTYKPKPSYP. Over residues 691 to 721 the composition is skewed to low complexity; that stretch reads PTYKSKSSYPSSYKPKKTYPPTYKPKLTYPP.

Hydroxylated on proline (mono- or dihydroxylation) and tyrosine residues (to L-DOPA = 3',4'-dihydroxyphenylalanine) of the tandem repeats. Produced by the byssal gland.

The protein resides in the secreted. Functionally, provides adhesiveness to the mussel's foot. Mussels produce one of the strongest water insoluble glues. The mussel's adhesive is a bundle of threads, called a byssus, formed by a fibrous collagenous core coated with adhesive proteins. This is Adhesive plaque matrix protein (FP1) from Mytilus galloprovincialis (Mediterranean mussel).